Reading from the N-terminus, the 240-residue chain is Ornithine decarboxylase antizyme (240 aa).

Disordered regions lie at residues 18 to 45 (RSEP…SSAG) and 69 to 95 (DHDR…SSEF). Over residues 21 to 33 (PISSSNRATKRTI) the composition is skewed to polar residues. Over residues 34–43 (SSSSSSSSSS) the composition is skewed to low complexity. The span at 69–84 (DHDRASPLKEYNRKTS) shows a compositional bias: basic and acidic residues. Polar residues predominate over residues 85–95 (IDSTTTASSEF).

This sequence belongs to the ODC antizyme family. In terms of assembly, interacts with ODC1 and thereby sterically blocks ODC homodimerization. In terms of tissue distribution, preferentially expressed in adult female midguts.

In terms of biological role, ornithine decarboxylase (ODC) antizyme protein that negatively regulates ODC activity and intracellular polyamine biosynthesis and uptake in response to increased intracellular polyamine levels. Binds to ODC monomers, inhibiting the assembly of the functional ODC homodimer, and targets the monomers for ubiquitin-independent proteolytic destruction by the 26S proteasome. The polypeptide is Ornithine decarboxylase antizyme (Oda) (Aedes aegypti (Yellowfever mosquito)).